The primary structure comprises 259 residues: MLKIADTTFTSRLFTGTGKFATPTLMAEAIKASGSQLVTMAMKRVDLKNGNDDLIAPLKSLGIKLLPNTSGAKTAQEAVFAARLAKEAFDTHWIKLEIHPDTKYLLPDPIETLKAAELLVKEGFVVLPYCSADPVLCRRLEEVGCAAVMPLGSPIGSNQGLQTRDFLRIIIEQTSIPVVVDAGIGAPSHALEALELGADAVLVNTAIAVAKNPVLMAQAFKAAIDAGELARQSGLAVPTSITHMQAQASSPLTQYLEAF.

The active-site Schiff-base intermediate with DXP is the Lys95. 1-deoxy-D-xylulose 5-phosphate-binding positions include Gly156, 182 to 183 (AG), and 204 to 205 (NT).

Belongs to the ThiG family. Homotetramer. Forms heterodimers with either ThiH or ThiS.

Its subcellular location is the cytoplasm. The catalysed reaction is [ThiS sulfur-carrier protein]-C-terminal-Gly-aminoethanethioate + 2-iminoacetate + 1-deoxy-D-xylulose 5-phosphate = [ThiS sulfur-carrier protein]-C-terminal Gly-Gly + 2-[(2R,5Z)-2-carboxy-4-methylthiazol-5(2H)-ylidene]ethyl phosphate + 2 H2O + H(+). It functions in the pathway cofactor biosynthesis; thiamine diphosphate biosynthesis. Its function is as follows. Catalyzes the rearrangement of 1-deoxy-D-xylulose 5-phosphate (DXP) to produce the thiazole phosphate moiety of thiamine. Sulfur is provided by the thiocarboxylate moiety of the carrier protein ThiS. In vitro, sulfur can be provided by H(2)S. This is Thiazole synthase from Proteus mirabilis (strain HI4320).